The sequence spans 384 residues: Chaperone protein DnaJ 1 (384 aa).

Positions 4–68 (DYYGLLGVAR…EKRRIVDMGG (65 aa)) constitute a J domain. A CR-type zinc finger spans residues 133 to 215 (GVTKHLTVDT…CGGDGRVRAR (83 aa)). Residues C146, C149, C163, C166, C189, C192, C203, and C206 each contribute to the Zn(2+) site. CXXCXGXG motif repeat units follow at residues 146 to 153 (CDACHGSG), 163 to 170 (CETCGGAG), 189 to 196 (CPTCRGAG), and 203 to 210 (CHKCGGDG).

The protein belongs to the DnaJ family. Homodimer. The cofactor is Zn(2+).

Its subcellular location is the cytoplasm. In terms of biological role, participates actively in the response to hyperosmotic and heat shock by preventing the aggregation of stress-denatured proteins and by disaggregating proteins, also in an autonomous, DnaK-independent fashion. Unfolded proteins bind initially to DnaJ; upon interaction with the DnaJ-bound protein, DnaK hydrolyzes its bound ATP, resulting in the formation of a stable complex. GrpE releases ADP from DnaK; ATP binding to DnaK triggers the release of the substrate protein, thus completing the reaction cycle. Several rounds of ATP-dependent interactions between DnaJ, DnaK and GrpE are required for fully efficient folding. Also involved, together with DnaK and GrpE, in the DNA replication of plasmids through activation of initiation proteins. The polypeptide is Chaperone protein DnaJ 1 (Nocardia farcinica (strain IFM 10152)).